Reading from the N-terminus, the 398-residue chain is ATP-dependent RNA helicase eIF4A (398 aa).

The Q motif signature appears at 25 to 53 (DSFDSMELKPELLRGIYAYGFERPSAIQQ). Residues 56-226 (ILPIIKGNDV…TKFMRDPVRI (171 aa)) enclose the Helicase ATP-binding domain. 69–76 (AQSGTGKT) is an ATP binding site. Positions 174 to 177 (DEAD) match the DEAD box motif. In terms of domain architecture, Helicase C-terminal spans 237–398 (GIKQFYIAVE…EMPMNVADLI (162 aa)).

It belongs to the DEAD box helicase family. eIF4A subfamily. Component of the eIF4F complex, which composition varies with external and internal environmental conditions. It is composed of at least eIF4A, eIF4E and eIF4G.

The protein resides in the cytoplasm. The enzyme catalyses ATP + H2O = ADP + phosphate + H(+). In terms of biological role, ATP-dependent RNA helicase which is a subunit of the eIF4F complex involved in cap recognition and is required for mRNA binding to ribosome. In the current model of translation initiation, eIF4A unwinds RNA secondary structures in the 5'-UTR of mRNAs which is necessary to allow efficient binding of the small ribosomal subunit, and subsequent scanning for the initiator codon. The protein is ATP-dependent RNA helicase eIF4A (tif1) of Neosartorya fischeri (strain ATCC 1020 / DSM 3700 / CBS 544.65 / FGSC A1164 / JCM 1740 / NRRL 181 / WB 181) (Aspergillus fischerianus).